The primary structure comprises 353 residues: Guanine nucleotide-binding protein G(q) subunit alpha (353 aa).

S-palmitoyl cysteine attachment occurs at residues C3 and C4. The 322-residue stretch at 32-353 (RELKLLLLGT…QLNLKEYNLV (322 aa)) folds into the G-alpha domain. Residues 35 to 48 (KLLLLGTGESGKST) are G1 motif. Residues 40–47 (GTGESGKS), 174–180 (LRVRAPT), 199–203 (DVGGQ), 268–271 (NKKD), and A325 contribute to the GTP site. Mg(2+) contacts are provided by S47 and T180. The tract at residues 172–180 (DILRVRAPT) is G2 motif. Residues 195-204 (FRMVDVGGQR) are G3 motif. Residues 264 to 271 (ILFLNKKD) are G4 motif. The segment at 323 to 328 (TCATDT) is G5 motif.

The protein belongs to the G-alpha family. G(q) subfamily. As to quaternary structure, g proteins are composed of 3 units; alpha, beta and gamma. The alpha chain contains the guanine nucleotide binding site.

In terms of biological role, guanine nucleotide-binding proteins (G proteins) are involved as modulators or transducers in various transmembrane signaling systems. The chain is Guanine nucleotide-binding protein G(q) subunit alpha from Homarus americanus (American lobster).